We begin with the raw amino-acid sequence, 72 residues long: Translation initiation factor IF-1 (72 aa).

An S1-like domain is found at 1–72 (MAKDDVIEVE…TRGRITYRYK (72 aa)). Y60 carries the post-translational modification Phosphotyrosine.

This sequence belongs to the IF-1 family. Component of the 30S ribosomal translation pre-initiation complex which assembles on the 30S ribosome in the order IF-2 and IF-3, IF-1 and N-formylmethionyl-tRNA(fMet); mRNA recruitment can occur at any time during PIC assembly.

The protein localises to the cytoplasm. One of the essential components for the initiation of protein synthesis. Stabilizes the binding of IF-2 and IF-3 on the 30S subunit to which N-formylmethionyl-tRNA(fMet) subsequently binds. Helps modulate mRNA selection, yielding the 30S pre-initiation complex (PIC). Upon addition of the 50S ribosomal subunit IF-1, IF-2 and IF-3 are released leaving the mature 70S translation initiation complex. This Geobacillus thermodenitrificans (strain NG80-2) protein is Translation initiation factor IF-1.